The following is a 331-amino-acid chain: UBX domain-containing protein 2B (331 aa).

Composition is skewed to basic and acidic residues over residues 1–16 (MAEG…ERGS) and 37–48 (DEMKCKSSKPDR). The tract at residues 1–70 (MAEGGRAEPE…PHRLYSGDHK (70 aa)) is disordered. Position 2 is an N-acetylalanine (alanine 2). Serine 56 is modified (phosphoserine). Threonine 59 bears the Phosphothreonine mark. Serine 66 carries the phosphoserine modification. The SEP domain maps to 141–206 (DVQVLLKLWR…MEDHQDQEYI (66 aa)). A phosphoserine mark is found at serine 231, serine 234, and serine 235. The region spanning 252-329 (DSMPTTKIQI…DILNTVILQQ (78 aa)) is the UBX domain.

Belongs to the NSFL1C family. Interacts with VCP. Does not bind ubiquitin.

It localises to the nucleus. The protein localises to the cytoplasm. Its subcellular location is the cytosol. The protein resides in the endoplasmic reticulum. It is found in the golgi apparatus. It localises to the cytoskeleton. The protein localises to the microtubule organizing center. Its subcellular location is the centrosome. In terms of biological role, adapter protein required for Golgi and endoplasmic reticulum biogenesis. Involved in Golgi and endoplasmic reticulum maintenance during interphase and in their reassembly at the end of mitosis. The complex formed with VCP has membrane fusion activity; membrane fusion activity requires USO1-GOLGA2 tethering and BET1L. VCPIP1 is also required, but not its deubiquitinating activity. Together with NSFL1C/p47, regulates the centrosomal levels of kinase AURKA/Aurora A during mitotic progression by promoting AURKA removal from centrosomes in prophase. Also, regulates spindle orientation during mitosis. The polypeptide is UBX domain-containing protein 2B (Ubxn2b) (Mus musculus (Mouse)).